Consider the following 151-residue polypeptide: Ribonuclease H (151 aa).

Residues 1–141 (MKHVDIFTDG…ADELARRGME (141 aa)) form the RNase H type-1 domain. Residues D9, E47, D69, and D133 each contribute to the Mg(2+) site.

It belongs to the RNase H family. In terms of assembly, monomer. Mg(2+) serves as cofactor.

It localises to the cytoplasm. It carries out the reaction Endonucleolytic cleavage to 5'-phosphomonoester.. In terms of biological role, endonuclease that specifically degrades the RNA of RNA-DNA hybrids. In Rhizobium etli (strain ATCC 51251 / DSM 11541 / JCM 21823 / NBRC 15573 / CFN 42), this protein is Ribonuclease H.